The chain runs to 492 residues: uncharacterized protein (492 aa).

The protein belongs to the FGGY kinase family.

This is an uncharacterized protein from Archaeoglobus fulgidus (strain ATCC 49558 / DSM 4304 / JCM 9628 / NBRC 100126 / VC-16).